The following is a 403-amino-acid chain: Metacaspase-7 (403 aa).

Residues H86 and C139 contribute to the active site. C139 bears the S-nitrosocysteine mark.

The protein belongs to the peptidase C14B family. Proteolytically processed; by an autocatalytic mechanism. As to expression, expressed in roots, flowers and siliques.

This is Metacaspase-7 (AMC7) from Arabidopsis thaliana (Mouse-ear cress).